A 100-amino-acid polypeptide reads, in one-letter code: uncharacterized protein (100 aa).

The HTH arsR-type domain occupies methionine 8–leucine 100. A DNA-binding region (H-T-H motif) is located at residues cysteine 44–glutamate 67.

This is an uncharacterized protein from Bacillus subtilis (strain 168).